Consider the following 356-residue polypeptide: tRNA N6-adenosine threonylcarbamoyltransferase (356 aa).

3 residues coordinate a divalent metal cation: H124, H128, and Y145. Substrate-binding positions include 145-149, D177, G192, E196, and N287; that span reads YVSGG. Residue D315 coordinates a divalent metal cation.

Belongs to the KAE1 / TsaD family. In terms of assembly, component of the EKC/KEOPS complex composed of at least BUD32, CGI121, GON7, KAE1 and PCC1; the whole complex dimerizes. It depends on a divalent metal cation as a cofactor.

It is found in the cytoplasm. It localises to the nucleus. The catalysed reaction is L-threonylcarbamoyladenylate + adenosine(37) in tRNA = N(6)-L-threonylcarbamoyladenosine(37) in tRNA + AMP + H(+). In terms of biological role, component of the EKC/KEOPS complex that is required for the formation of a threonylcarbamoyl group on adenosine at position 37 (t(6)A37) in tRNAs that read codons beginning with adenine. The complex is probably involved in the transfer of the threonylcarbamoyl moiety of threonylcarbamoyl-AMP (TC-AMP) to the N6 group of A37. KAE1 likely plays a direct catalytic role in this reaction, but requires other protein(s) of the complex to fulfill this activity. The EKC/KEOPS complex also promotes both telomere uncapping and telomere elongation. The complex is required for efficient recruitment of transcriptional coactivators. The chain is tRNA N6-adenosine threonylcarbamoyltransferase from Yarrowia lipolytica (strain CLIB 122 / E 150) (Yeast).